The primary structure comprises 103 residues: Small ribosomal subunit protein uS10 (103 aa).

It belongs to the universal ribosomal protein uS10 family. Part of the 30S ribosomal subunit.

In terms of biological role, involved in the binding of tRNA to the ribosomes. In Novosphingobium aromaticivorans (strain ATCC 700278 / DSM 12444 / CCUG 56034 / CIP 105152 / NBRC 16084 / F199), this protein is Small ribosomal subunit protein uS10.